Here is a 170-residue protein sequence, read N- to C-terminus: NADH-quinone oxidoreductase subunit B (170 aa).

The [4Fe-4S] cluster site is built by Cys37, Cys38, Cys102, and Cys131.

The protein belongs to the complex I 20 kDa subunit family. As to quaternary structure, NDH-1 is composed of 14 different subunits. Subunits NuoB, C, D, E, F, and G constitute the peripheral sector of the complex. [4Fe-4S] cluster serves as cofactor.

The protein resides in the cell inner membrane. It carries out the reaction a quinone + NADH + 5 H(+)(in) = a quinol + NAD(+) + 4 H(+)(out). NDH-1 shuttles electrons from NADH, via FMN and iron-sulfur (Fe-S) centers, to quinones in the respiratory chain. The immediate electron acceptor for the enzyme in this species is believed to be ubiquinone. Couples the redox reaction to proton translocation (for every two electrons transferred, four hydrogen ions are translocated across the cytoplasmic membrane), and thus conserves the redox energy in a proton gradient. The protein is NADH-quinone oxidoreductase subunit B of Citrifermentans bemidjiense (strain ATCC BAA-1014 / DSM 16622 / JCM 12645 / Bem) (Geobacter bemidjiensis).